Reading from the N-terminus, the 516-residue chain is Apolipoprotein N-acyltransferase (516 aa).

A run of 6 helical transmembrane segments spans residues 24–44, 58–78, 90–110, 125–145, 163–183, and 192–212; these read LAQAPFDLWPLALLSLALLYL, GWCYGFGLYAVGTSWIYISIH, LLTLALMLALAFFFALPAWLW, LAFAALWLALEGFRGWFLTGF, APLGGVWLLSFALALSAALLV, and PPALLGALVLLLAPWATGLAL. The 242-residue stretch at 230–471 folds into the CN hydrolase domain; it reads VQGNVEQNLK…RAVLYGEVTP (242 aa). E270 serves as the catalytic Proton acceptor. Residue K331 is part of the active site. C383 serves as the catalytic Nucleophile. The chain crosses the membrane as a helical span at residues 479–499; it reads LRWRAWPLAGLAVLLLGWALL.

This sequence belongs to the CN hydrolase family. Apolipoprotein N-acyltransferase subfamily.

Its subcellular location is the cell inner membrane. The catalysed reaction is N-terminal S-1,2-diacyl-sn-glyceryl-L-cysteinyl-[lipoprotein] + a glycerophospholipid = N-acyl-S-1,2-diacyl-sn-glyceryl-L-cysteinyl-[lipoprotein] + a 2-acyl-sn-glycero-3-phospholipid + H(+). It functions in the pathway protein modification; lipoprotein biosynthesis (N-acyl transfer). In terms of biological role, catalyzes the phospholipid dependent N-acylation of the N-terminal cysteine of apolipoprotein, the last step in lipoprotein maturation. The chain is Apolipoprotein N-acyltransferase from Azotobacter vinelandii (strain DJ / ATCC BAA-1303).